Reading from the N-terminus, the 115-residue chain is Cholecystokinin (115 aa).

Positions 1–20 (MNSGVSLCVLMAVLAAGALT) are cleaved as a signal peptide. Positions 21–44 (QPVPPAEPAGSGLQRAEEAPRRQL) are excised as a propeptide. Residues 21-51 (QPVPPAEPAGSGLQRAEEAPRRQLRAVQRTD) form a disordered region. A glycan (O-linked (Xyl...) (chondroitin sulfate) serine) is linked at Ser31. Tyr97 is modified (sulfotyrosine). Phe103 carries the post-translational modification Phenylalanine amide. Positions 107–115 (SAEEYEYPS) are excised as a propeptide. Sulfotyrosine occurs at positions 111 and 113.

Belongs to the gastrin/cholecystokinin family. In terms of assembly, binds to CCK-A receptors in the pancreas and CCK-B receptors in the brain. In terms of processing, the precursor is cleaved by proteases to produce a number of active cholecystokinins. Post-translationally, the precursor is cleaved by ACE, which removes the Gly-Arg-Arg peptide at the C-terminus, leading to mature hormone.

It localises to the secreted. Its function is as follows. This peptide hormone induces gall bladder contraction and the release of pancreatic enzymes in the gut. Its function in the brain is not clear. Binding to CCK-A receptors stimulates amylase release from the pancreas, binding to CCK-B receptors stimulates gastric acid secretion. This is Cholecystokinin (CCK) from Macaca fascicularis (Crab-eating macaque).